The chain runs to 155 residues: Small ribosomal subunit protein uS7 (155 aa).

Belongs to the universal ribosomal protein uS7 family. Part of the 30S ribosomal subunit. Contacts proteins S9 and S11.

One of the primary rRNA binding proteins, it binds directly to 16S rRNA where it nucleates assembly of the head domain of the 30S subunit. Is located at the subunit interface close to the decoding center, probably blocks exit of the E-site tRNA. In Thioalkalivibrio sulfidiphilus (strain HL-EbGR7), this protein is Small ribosomal subunit protein uS7.